Here is a 576-residue protein sequence, read N- to C-terminus: Coilin (576 aa).

Serine 105 is modified (phosphoserine). The residue at position 122 (threonine 122) is a Phosphothreonine. 2 disordered regions span residues 125 to 330 and 352 to 389; these read DCKY…CLMS and RPGP…SLPA. Residues lysine 127, lysine 151, and lysine 160 each participate in a glycyl lysine isopeptide (Lys-Gly) (interchain with G-Cter in SUMO2) cross-link. Residue serine 184 is modified to Phosphoserine; by VRK1 and VRK2. Residues lysine 204 and lysine 209 each participate in a glycyl lysine isopeptide (Lys-Gly) (interchain with G-Cter in SUMO2) cross-link. The segment covering 214 to 225 has biased composition (polar residues); it reads QRCSSPKGSARN. The 1-1 repeat unit spans residues 223–226; sequence ARNS. Positions 223-271 are 2 X 4 AA repeats of A-R-N-S; sequence ARNSLVKAKRKGSVSVCSKESPSSSSESESCDESISDGPSKVTLEARNS. The span at 235 to 250 shows a compositional bias: low complexity; the sequence is SVSVCSKESPSSSSES. Residues serine 248, serine 250, serine 256, serine 271, and serine 272 each carry the phosphoserine modification. The stretch at 268–271 is one 1-2 repeat; the sequence is ARNS. The segment covering 270–285 has biased composition (basic and acidic residues); sequence NSSEKLPTELSKEEPS. Residues lysine 274 and lysine 281 each participate in a glycyl lysine isopeptide (Lys-Gly) (interchain with G-Cter in SUMO2) cross-link. Phosphothreonine is present on threonine 290. Residues lysine 293 and lysine 297 each participate in a glycyl lysine isopeptide (Lys-Gly) (interchain with G-Cter in SUMO2) cross-link. The residue at position 301 (serine 301) is a Phosphoserine. Residues 301-320 show a composition bias toward low complexity; that stretch reads SLTPSKGKTSGTTSSSSDSS. Threonine 303 bears the Phosphothreonine mark. The stretch at 386-389 is one 2-1 repeat; it reads SLPA. The interval 386–520 is 2 X 4 AA repeats of S-L-P-A; that stretch reads SLPASLGRGW…DIEILSSLPA (135 aa). Positions 392–420 are required for interaction with SMN; it reads GRGWGREENLFSWKGAKGRGMRGRGRGRG. Serine 403 is modified (phosphoserine). A run of 4 repeats spans residues 413-414, 415-416, 417-418, and 419-420. Residues 413–420 are 4 X 2 AA tandem repeats of R-G; sequence RGRGRGRG. Residue lysine 444 forms a Glycyl lysine isopeptide (Lys-Gly) (interchain with G-Cter in SUMO2) linkage. Threonine 456 carries the post-translational modification Phosphothreonine. The region spanning 460–559 is the Tudor; atypical domain; sequence DYSLLPLLAA…ITVFWKELID (100 aa). Serine 487 and serine 489 each carry phosphoserine. Residue lysine 496 forms a Glycyl lysine isopeptide (Lys-Gly) (interchain with G-Cter in SUMO2) linkage. Residues 517-520 form a 2-2 repeat; it reads SLPA. Position 566 is a phosphoserine (serine 566).

It belongs to the coilin family. As to quaternary structure, interacts with ANKS1B. Interacts with SMN1 (via Tudor domain). Interacts (via C-terminus) with AK6. Interacts with WRAP53/TCAB1. Interacts with HMBOX1. Interacts with PSME3; the interaction is inhibited by PSME3IP1. Interacts wit UBL5. Post-translationally, symmetrical dimethylation of arginine residues within the RG repeat region enhances affinity for SMN, and thus localization of SMN complexes to CBs. Phosphorylated by VRK1. Phosphorylation during mitosis is associated with disassembly of CBs. As to expression, found in all the cell types examined.

Its subcellular location is the nucleus. It is found in the cajal body. Component of nuclear coiled bodies, also known as Cajal bodies or CBs, which are involved in the modification and assembly of nucleoplasmic snRNPs. This chain is Coilin (COIL), found in Homo sapiens (Human).